The following is a 304-amino-acid chain: Recombination-associated protein RdgC (304 aa).

Belongs to the RdgC family.

The protein resides in the cytoplasm. It is found in the nucleoid. Functionally, may be involved in recombination. This is Recombination-associated protein RdgC from Dechloromonas aromatica (strain RCB).